We begin with the raw amino-acid sequence, 51 residues long: Lantibiotic lacticin-481 (51 aa).

Residues 1-24 (MKEQNSFNLLQEVTESELDLILGA) constitute a propeptide that is removed on maturation. A cross-link (beta-methyllanthionine (Thr-Cys)) is located at residues 33-38 (TISHEC). 2 consecutive cross-links (lanthionine (Ser-Cys)) follow at residues 35 to 49 (SHEC…VFTC) and 42 to 50 (SWQFVFTCC). Thr48 bears the (Z)-2,3-didehydrobutyrine mark.

Belongs to the type A lantibiotic family. Monomer or homodimer. In terms of processing, maturation of lantibiotics involves the enzymatic conversion of Thr, and Ser into dehydrated AA and the formation of thioether bonds with cysteine. This is followed by membrane translocation and cleavage of the modified precursor. Post-translationally, it is established that the 2,3-didehydrobutyrine is the Z-isomer.

Functionally, lanthionine-containing peptide antibiotic (lantibiotic) active on Gram-positive bacteria. The bactericidal activity of lantibiotics is based on depolarization of energized bacterial cytoplasmic membranes, initiated by the formation of aqueous transmembrane pores. Lacticin 481 is a broad spectrum bacteriocin exhibiting activity against a wide range of lactic acid bacteria and C.tyrobutyricum. This Lactococcus lactis subsp. lactis (Streptococcus lactis) protein is Lantibiotic lacticin-481 (lctA).